Reading from the N-terminus, the 39-residue chain is Cytochrome b559 subunit beta (39 aa).

A helical transmembrane segment spans residues Trp-14 to Ser-30. His-18 serves as a coordination point for heme.

It belongs to the PsbE/PsbF family. Heterodimer of an alpha subunit and a beta subunit. PSII is composed of 1 copy each of membrane proteins PsbA, PsbB, PsbC, PsbD, PsbE, PsbF, PsbH, PsbI, PsbJ, PsbK, PsbL, PsbM, PsbT, PsbX, PsbY, PsbZ, Psb30/Ycf12, at least 3 peripheral proteins of the oxygen-evolving complex and a large number of cofactors. It forms dimeric complexes. Heme b serves as cofactor.

The protein resides in the plastid. The protein localises to the chloroplast thylakoid membrane. Functionally, this b-type cytochrome is tightly associated with the reaction center of photosystem II (PSII). PSII is a light-driven water:plastoquinone oxidoreductase that uses light energy to abstract electrons from H(2)O, generating O(2) and a proton gradient subsequently used for ATP formation. It consists of a core antenna complex that captures photons, and an electron transfer chain that converts photonic excitation into a charge separation. The sequence is that of Cytochrome b559 subunit beta from Welwitschia mirabilis (Tree tumbo).